The sequence spans 461 residues: Nuclear distribution protein PAC1 (461 aa).

The region spanning 9–41 (QAEELHKAIIAYLSANNLSSSATALRTELGLAE) is the LisH domain. A coiled-coil region spans residues 61-88 (TSVVRLQKKIMDLESRNNALQSELDNAT). 8 WD repeats span residues 114-155 (SHQN…RTIK), 157-197 (HTRP…KNIR), 201-248 (GHDH…CLKT), 251-290 (GHTA…PENR), 295-355 (GHDH…LKTL), 357-396 (GHDN…KCVK), 401-444 (VHER…VRIR), and 446-461 (VIAT…IFAN).

The protein belongs to the WD repeat LIS1/nudF family. As to quaternary structure, self-associates. Interacts with NDL1 and dynein.

It is found in the cytoplasm. The protein localises to the cytoskeleton. Its subcellular location is the spindle pole. In terms of biological role, positively regulates the activity of the minus-end directed microtubule motor protein dynein. May enhance dynein-mediated microtubule sliding by targeting dynein to the microtubule plus end. Required for nuclear migration during vegetative growth as well as development. Required for retrograde early endosome (EE) transport from the hyphal tip. Required for localization of dynein to the mitotic spindle poles. Recruits additional proteins to the dynein complex at SPBs. This is Nuclear distribution protein PAC1 from Pyricularia oryzae (strain 70-15 / ATCC MYA-4617 / FGSC 8958) (Rice blast fungus).